The primary structure comprises 218 residues: Small ribosomal subunit protein uS3 (218 aa).

Position 1 is an N-acetylmethionine (M1). Residues 23 to 95 (LNELFTREFN…TVVLFAEKIL (73 aa)) enclose the KH type-2 domain.

This sequence belongs to the universal ribosomal protein uS3 family.

The protein is Small ribosomal subunit protein uS3 (rps3) of Dictyostelium discoideum (Social amoeba).